Here is a 768-residue protein sequence, read N- to C-terminus: Gephyrin (768 aa).

The interval 14–166 (QIRVGVLTVS…LPGSKKGSQE (153 aa)) is MPT Mo-transferase. Residues 153 to 348 (LIINLPGSKK…VDITKVARRH (196 aa)) form an interaction with GABARAP region. 2 disordered regions span residues 194–245 (DELE…DSSS) and 273–316 (TASL…ASRV). The segment covering 200–212 (PSPPPPLSPPPTT) has biased composition (pro residues). A phosphoserine mark is found at S201 and S207. Position 211 is a phosphothreonine (T211). At S213 the chain carries Phosphoserine. C225 is lipidated: S-palmitoyl cysteine. A compositionally biased stretch (polar residues) spans 274-299 (ASLSTTPSESPRAQATSRLSTASCPT). The residue at position 275 (S275) is a Phosphoserine. A phosphothreonine mark is found at T278 and T279. Residues S281 and S283 each carry the phosphoserine modification. A lipid anchor (S-palmitoyl cysteine) is attached at C297. An MPT adenylyltransferase region spans residues 326–768 (SSKENILRAS…VVDVMVIGRL (443 aa)). S337 is modified (phosphoserine).

The protein in the N-terminal section; belongs to the MoaB/Mog family. This sequence in the C-terminal section; belongs to the MoeA family. Homotrimer, homodimer and homooligomer. Interacts with SRGAP2 (via SH3 domain). Interacts with GLRB. Interacts with GABARAP. Interacts with GABRA3. GABRA3 and GLRB occupy overlapping binding sites. Interacts with ARHGAP32; IQSEC3, INSYN1 and INSYN2A. Requires Mg(2+) as cofactor. Phosphorylated. Post-translationally, palmitoylated. Palmitoylation is stimulated by GABA type A receptors activity. Palmitoylation by ZDHHC12 regulates clustering at synapses. In terms of tissue distribution, expressed in tissues including spinal cord, brain, liver, kidney and lung.

The protein localises to the postsynaptic cell membrane. It is found in the cell membrane. The protein resides in the cytoplasm. It localises to the cytosol. Its subcellular location is the cytoskeleton. The protein localises to the cell projection. It is found in the dendrite. The protein resides in the postsynaptic density. The catalysed reaction is molybdopterin + ATP + H(+) = adenylyl-molybdopterin + diphosphate. The enzyme catalyses adenylyl-molybdopterin + molybdate = Mo-molybdopterin + AMP + H(+). It participates in cofactor biosynthesis; molybdopterin biosynthesis. Inhibited by copper and tungsten. In terms of biological role, microtubule-associated protein involved in membrane protein-cytoskeleton interactions. It is thought to anchor the inhibitory glycine receptor (GLYR) to subsynaptic microtubules. Acts as a major instructive molecule at inhibitory synapses, where it also clusters GABA type A receptors. Also has a catalytic activity and catalyzes two steps in the biosynthesis of the molybdenum cofactor. In the first step, molybdopterin is adenylated. Subsequently, molybdate is inserted into adenylated molybdopterin and AMP is released. This is Gephyrin (Gphn) from Rattus norvegicus (Rat).